Consider the following 555-residue polypeptide: O-fucosyltransferase 20 (555 aa).

The Cytoplasmic segment spans residues 1–58 (MALPKNGGNSSSTKKKVSYISVPSQIINSLSSSSLQSLLVSPKKSSRCTNRFSYRNPR). A helical; Signal-anchor for type II membrane protein transmembrane segment spans residues 59-79 (IWFLTLFLVSLFGMLKLGLNV). Residues 80–555 (DPISLPFSRY…MCSDRRQQQQ (476 aa)) are Lumenal-facing. A disordered region spans residues 110–130 (KNDTQSSSSSEHRKNETLPTE). Residues Asn111 and Asn124 are each glycosylated (N-linked (GlcNAc...) asparagine). 330–332 (HLR) serves as a coordination point for substrate. N-linked (GlcNAc...) asparagine glycans are attached at residues Asn371 and Asn503. The disordered stretch occupies residues 525–555 (QPELRTGRGGKDVTKHPVSECMCSDRRQQQQ). Basic and acidic residues predominate over residues 529–555 (RTGRGGKDVTKHPVSECMCSDRRQQQQ).

Belongs to the glycosyltransferase GT106 family. Highly expressed in embryogenic microspore and in vegetative tissues.

Its subcellular location is the golgi apparatus membrane. Its pathway is glycan metabolism. May play a role in the biosynthesis of matrix polysaccharides and contribute to the biomechanics and development of the plant cell wall. The chain is O-fucosyltransferase 20 from Brassica napus (Rape).